The primary structure comprises 334 residues: Syntaxin-18 (334 aa).

Over 1–308 the chain is Cytoplasmic; sequence MAVDITLLFR…EDIREAIKNN (308 aa). Disordered stretches follow at residues 29-50 and 166-225; these read GGAD…GDFS and LSKL…GEDE. Basic and acidic residues-rich tracts occupy residues 33 to 50, 166 to 186, and 193 to 207; these read GSRD…GDFS, LSKL…EKSS, and SEEK…EKPL. The region spanning 242 to 304 is the t-SNARE coiled-coil homology domain; the sequence is IGEMNSLFDE…KEGNEDIREA (63 aa). The helical; Anchor for type IV membrane protein transmembrane segment at 309–329 threads the bilayer; that stretch reads AGFRVWILFFLVMCSFSLLFL. Residues 330–334 lie on the Vesicular side of the membrane; that stretch reads DWYDS.

It belongs to the syntaxin family. Component of a SNARE complex consisting of STX18, USE1L, BNIP1/SEC20L, and SEC22B. RINT1/TIP20L and ZW10 are associated with the complex through interaction with BNIP1/SEC20L. Interacts directly with USE1L and BNIP1/SEC20L.

Its subcellular location is the endoplasmic reticulum membrane. It localises to the golgi apparatus membrane. Functionally, syntaxin that may be involved in targeting and fusion of Golgi-derived retrograde transport vesicles with the ER. The protein is Syntaxin-18 (Stx18) of Rattus norvegicus (Rat).